The sequence spans 139 residues: Plastocyanin (139 aa).

The signal sequence occupies residues 1-34; that stretch reads MKLIAASLRRLSLAVLTVLLVVSSFAVFTPSAAA. The region spanning 35–135 is the Plastocyanin-like domain; it reads ETYTVKLGSD…HRGAGMVGKI (101 aa). Positions 73, 123, 126, and 131 each coordinate Cu cation.

This sequence belongs to the plastocyanin family. It depends on Cu(2+) as a cofactor.

Its subcellular location is the cellular thylakoid membrane. Functionally, participates in electron transfer between P700 and the cytochrome b6-f complex in photosystem I. The chain is Plastocyanin (petE) from Trichormus variabilis (strain ATCC 29413 / PCC 7937) (Anabaena variabilis).